Here is a 68-residue protein sequence, read N- to C-terminus: Beta-defensin 1 (68 aa).

An N-terminal signal peptide occupies residues 1–21 (MRTSYLLLFTLCLLLSEMASG). Residues 22–32 (DNFLTGLGHRS) constitute a propeptide that is removed on maturation. 3 disulfides stabilise this stretch: Cys37–Cys66, Cys44–Cys59, and Cys49–Cys67.

This sequence belongs to the beta-defensin family. As to quaternary structure, monomer. Homodimer.

Its subcellular location is the secreted. It is found in the membrane. In terms of biological role, has bactericidal activity. May act as a ligand for C-C chemokine receptor CCR6. Positively regulates the sperm motility and bactericidal activity in a CCR6-dependent manner. Binds to CCR6 and triggers Ca2+ mobilization in the sperm which is important for its motility. This is Beta-defensin 1 (DEFB1) from Macaca mulatta (Rhesus macaque).